The following is a 461-amino-acid chain: Fumarate hydratase class II (461 aa).

Residues 97–99, 127–130, 137–139, and threonine 185 contribute to the substrate site; these read SGT, HPND, and SSN. The Proton donor/acceptor role is filled by histidine 186. Serine 316 is an active-site residue. Substrate is bound by residues serine 317 and 322–324; that span reads KVN.

Belongs to the class-II fumarase/aspartase family. Fumarase subfamily. In terms of assembly, homotetramer.

Its subcellular location is the cytoplasm. It catalyses the reaction (S)-malate = fumarate + H2O. It participates in carbohydrate metabolism; tricarboxylic acid cycle; (S)-malate from fumarate: step 1/1. In terms of biological role, involved in the TCA cycle. Catalyzes the stereospecific interconversion of fumarate to L-malate. This is Fumarate hydratase class II from Staphylococcus aureus (strain MRSA252).